The primary structure comprises 479 residues: Cyclin-dependent kinase F-1 (479 aa).

In terms of domain architecture, Protein kinase spans 21 to 418; sequence YEIFERVGSG…TMEMLNDKYL (398 aa). ATP-binding positions include 27-35 and Lys-50; that span reads VGSGAYADV. Tyr-32 carries the phosphotyrosine modification. The active-site Proton acceptor is the Asp-146. Phosphoserine occurs at positions 179, 208, and 247. Positions 187–221 are disordered; it reads KLEDKDGETSEPPEVIPDYENSPRQGSDGQEREAM. The residue at position 290 (Thr-290) is a Phosphothreonine. The disordered stretch occupies residues 434-479; that stretch reads PTMSGPDEDSPRKWNDYREMDSDSDFDGFGPMNVKPTSSGFTIEFP. Basic and acidic residues predominate over residues 442-454; it reads DSPRKWNDYREMD. Residues 468 to 479 show a composition bias toward polar residues; sequence KPTSSGFTIEFP.

The protein belongs to the protein kinase superfamily. CMGC Ser/Thr protein kinase family. CDC2/CDKX subfamily. Highly expressed in suspension cell culture. Expressed at low levels in all plant organs.

The enzyme catalyses L-seryl-[protein] + ATP = O-phospho-L-seryl-[protein] + ADP + H(+). It catalyses the reaction L-threonyl-[protein] + ATP = O-phospho-L-threonyl-[protein] + ADP + H(+). It carries out the reaction [DNA-directed RNA polymerase] + ATP = phospho-[DNA-directed RNA polymerase] + ADP + H(+). CDK-activating kinase that modulates CDKD-2 and CDKD-3 activities by phosphorylation of the T-loop. Activates CDKD-2 C-terminal domain (CTD) kinase activity. Activates CDKA-1 probably by phosphorylation. Possesses a CDK kinase activity independently of association with cyclin CYCH1-1. Phosphorylates the CTD of the large subunit of RNA polymerase II. This Arabidopsis thaliana (Mouse-ear cress) protein is Cyclin-dependent kinase F-1 (CDKF-1).